The sequence spans 138 residues: Small ribosomal subunit protein uS11 (138 aa).

Positions 1–12 (MPPKKAAASSAK) are enriched in low complexity. The tract at residues 1-28 (MPPKKAAASSAKKGQKTRRREKKNVPHG) is disordered. Positions 13-22 (KGQKTRRREK) are enriched in basic residues.

This sequence belongs to the universal ribosomal protein uS11 family. In terms of assembly, part of the 30S ribosomal subunit. Interacts with proteins S7 and S18. Binds to IF-3.

In terms of biological role, located on the platform of the 30S subunit, it bridges several disparate RNA helices of the 16S rRNA. Forms part of the Shine-Dalgarno cleft in the 70S ribosome. The protein is Small ribosomal subunit protein uS11 of Mycobacterium sp. (strain JLS).